Reading from the N-terminus, the 158-residue chain is UPF0262 protein R00612 (158 aa).

It belongs to the UPF0262 family.

This Rhizobium meliloti (strain 1021) (Ensifer meliloti) protein is UPF0262 protein R00612.